The chain runs to 515 residues: Cytochrome P450 monooxygenase ptmJ (515 aa).

Transmembrane regions (helical) follow at residues L6–I26, L50–V70, V82–V102, and V300–H320. A heme-binding site is contributed by C449.

It belongs to the cytochrome P450 family. Requires heme as cofactor.

The protein localises to the membrane. Its pathway is secondary metabolite biosynthesis. Cytochrome P450 monooxygenase; part of the gene cluster that mediates the biosynthesis of the indole diterpenes penitrems. The geranylgeranyl diphosphate (GGPP) synthase ptmG catalyzes the first step in penitrem biosynthesis via conversion of farnesyl pyrophosphate and isopentyl pyrophosphate into geranylgeranyl pyrophosphate (GGPP). Condensation of indole-3-glycerol phosphate with GGPP by the prenyl transferase ptmC then forms 3-geranylgeranylindole (3-GGI). Epoxidation by the FAD-dependent monooxygenase ptmM leads to a epoxidized-GGI that is substrate of the terpene cyclase ptmB for cyclization to yield paspaline. Paspaline is subsequently converted to 13-desoxypaxilline by the cytochrome P450 monooxygenase ptmP, the latter being then converted to paxilline by the cytochrome P450 monooxygenase ptmQ. Paxilline is converted to beta-paxitriol via C-10 ketoreduction by the short-chain dehydrogenase ptmH which can be monoprenylated at the C-20 by the indole diterpene prenyltransferase ptmD. A two-step elimination (acetylation and elimination) process performed by the O-acetyltransferase ptmV and ptmI leads to the production of the prenylated form of penijanthine. The FAD-linked oxidoreductase ptmO then converts the prenylated form of penijanthine into PC-M5 which is in turn transformed into PC-M4 by the aromatic dimethylallyltransferase ptmE. Five sequential oxidative transformations performed by the cytochrome P450 monooxygenases ptmK, ptmU, ptmL, ptmN and ptmJ yield the various penitrem compounds. PtmK, ptmU and ptmM are involved in the formation of the key bicyclic ring of penitrem C via the formation of the intermediates secopenitrem D and penitrem D. PtmL catalyzes the epoxidation of penitrem D and C to yield penitrem B and F, respectively. PtmJ catalyzes the last benzylic hydroxylation to convert penitrem B to prenitrem E and penitrem F to penitrem A. This is Cytochrome P450 monooxygenase ptmJ from Penicillium ochrochloron.